We begin with the raw amino-acid sequence, 376 residues long: Peroxisomal targeting signal 2 receptor (376 aa).

WD repeat units lie at residues 58–98, 102–142, 182–222, 226–267, 279–319, and 339–376; these read DTQD…YPVM, EHQR…NTSL, DNND…PLFM, AHNG…PNVH, GHEF…TSRV, and AHTEFVMGCDWSLWGEPGWVVTTGWDEMVYVWNTQRLQ.

This sequence belongs to the WD repeat peroxin-7 family. Interacts with PEX20. In terms of processing, polyubiquitinated, leading to its degradation by the proteasome. Ubiquitination is dependent of PEX5 and PEX20 and takes place following recycling into the cytosol.

It localises to the cytoplasm. It is found in the cytosol. Its subcellular location is the peroxisome matrix. In terms of biological role, receptor required for the peroxisomal import of proteins containing a C-terminal PTS2-type peroxisomal targeting signal, such as 3-oxoacyl-CoA thiolase. Specifically binds to cargo proteins containing a PTS2 peroxisomal targeting signal in the cytosol. Cargo protein-binding triggers interaction with PEX20 and formation of a ternary complex composed of PEX20 and PEX7 along with PTS2-containing cargo proteins, which is tranlocated into peroxisomes by passing through the peroxisomal docking complex. PEX7 receptor is then retrotranslocated into the cytosol, where it is ubiquitinated and degraded. The polypeptide is Peroxisomal targeting signal 2 receptor (Komagataella phaffii (strain GS115 / ATCC 20864) (Yeast)).